The primary structure comprises 544 residues: Chaperonin GroEL 2 (544 aa).

ATP is bound by residues Thr-30–Pro-33, Lys-51, Asp-87–Thr-91, Gly-415, and Asp-496.

This sequence belongs to the chaperonin (HSP60) family. As to quaternary structure, forms a cylinder of 14 subunits composed of two heptameric rings stacked back-to-back. Interacts with the co-chaperonin GroES.

It localises to the cytoplasm. It carries out the reaction ATP + H2O + a folded polypeptide = ADP + phosphate + an unfolded polypeptide.. Its function is as follows. Together with its co-chaperonin GroES, plays an essential role in assisting protein folding. The GroEL-GroES system forms a nano-cage that allows encapsulation of the non-native substrate proteins and provides a physical environment optimized to promote and accelerate protein folding. The protein is Chaperonin GroEL 2 of Rhizobium johnstonii (strain DSM 114642 / LMG 32736 / 3841) (Rhizobium leguminosarum bv. viciae).